A 245-amino-acid polypeptide reads, in one-letter code: tRNA (guanine-N(1)-)-methyltransferase (245 aa).

S-adenosyl-L-methionine contacts are provided by residues Gly-111 and 131–136 (MGDYVL).

The protein belongs to the RNA methyltransferase TrmD family. Homodimer.

It localises to the cytoplasm. The enzyme catalyses guanosine(37) in tRNA + S-adenosyl-L-methionine = N(1)-methylguanosine(37) in tRNA + S-adenosyl-L-homocysteine + H(+). Functionally, specifically methylates guanosine-37 in various tRNAs. The polypeptide is tRNA (guanine-N(1)-)-methyltransferase (Staphylococcus aureus (strain Mu3 / ATCC 700698)).